The sequence spans 192 residues: Large ribosomal subunit protein uL6 (192 aa).

Belongs to the universal ribosomal protein uL6 family. Part of the 50S ribosomal subunit.

Functionally, this protein binds to the 23S rRNA, and is important in its secondary structure. It is located near the subunit interface in the base of the L7/L12 stalk, and near the tRNA binding site of the peptidyltransferase center. In Nanoarchaeum equitans (strain Kin4-M), this protein is Large ribosomal subunit protein uL6.